The chain runs to 733 residues: MTLNPSTLNNGTLGDLKEHKDVVLSSNAQTDEKRFEEPSLEVGGSLAKVENGLSTSISSSASNLEGQQAPFFTKQNSCLSRFRELAQTYNIHEINLEEYVSQIKEVKQSLYSDDSVFNESKSSSPPDAHTDKYFTPCGSPTKLIHSTLLEERDTPSSLEHVSFYLQESAVSEVRFDKPSNNGPLGRSSLNLSSLSHELQTSQDSPSLSATNQLSSSDTLEPLQYPPSSFGSQRQFNASQDSPKRSPSKGSWSSILRRPSLTYSPKRQSTGLHRRSLTNYFKFPHRNAHQHNAIAHNPSVFGKPIGDLTSDPTNLCKFTFPTPECAPPSLLLPHIFAQCVHFLSLNALHVPGIFRISGSGPVIKAITEYFYSPPHFWLDETSEIFKRIGFPSYIDIAAVLKRYIMLLPGGLFTHKDILNLLVPLYVDSSRVKVPIDIRNEMAALCFSQIDSYVRFSILCSLLALLHQIATRTQELENGMENTKDSTLMKPEALGIIFGPLLLGNSSTDLSKSCPSGNVNDLMRFETEKARVEAKIVEGLIIHWPEVLLKINSLDIPNCFSDVGLTDQVAIFTPAVPKEDSPEQIPENVNASEESYPNVKHISKLPLINDSSDNESGNQENDDAVANESTKVVVDNQQPQPKISTVSDTAVPSMSFANNISSRSVISAATDSKPSTRTSPPFVNNTKPIVAKSPVTVTASSETNKKSQKINKKASPRVSLWTKLFGKFRSNKKKS.

A compositionally biased stretch (polar residues) spans 116-125; the sequence is VFNESKSSSP. Positions 116 to 135 are disordered; that stretch reads VFNESKSSSPPDAHTDKYFT. Threonine 141 is subject to Phosphothreonine. A disordered region spans residues 174-256; that stretch reads RFDKPSNNGP…SKGSWSSILR (83 aa). The span at 179 to 195 shows a compositional bias: low complexity; that stretch reads SNNGPLGRSSLNLSSLS. Polar residues-rich tracts occupy residues 196 to 218 and 225 to 240; these read HELQ…SSDT and PPSS…ASQD. Residues 312–546 form the Rho-GAP domain; sequence TNLCKFTFPT…GLIIHWPEVL (235 aa). The interval 692–713 is disordered; that stretch reads PVTVTASSETNKKSQKINKKAS. Basic residues predominate over residues 704 to 713; it reads KSQKINKKAS.

This Schizosaccharomyces pombe (strain 972 / ATCC 24843) (Fission yeast) protein is Probable Rho-GTPase-activating protein 6 (rga6).